The primary structure comprises 234 residues: Kappa-casein (234 aa).

Residues 1-21 (MMKSFLLVVNIVALTLPFLAA) form the signal peptide. Tandem repeats lie at residues 127–153 (LGKA…QPTV), 154–179 (SAGD…EEAR), and 180–207 (ESPE…PRES). The segment at 127 to 207 (LGKATILSTD…AVPSEEPRES (81 aa)) is 3 X 27 AA tandem repeats. The interval 143–234 (QTPVSAAQPT…STGPAIASMA (92 aa)) is disordered. O-linked (GalNAc...) threonine glycosylation is present at Thr144. Polar residues predominate over residues 144–171 (TPVSAAQPTVSAGDTPEVSSQFIDTPDT). Thr158 is modified (phosphothreonine). Ser162 bears the Phosphoserine; alternate mark. The O-linked (GalNAc...) serine; alternate glycan is linked to Ser162.

It belongs to the kappa-casein family. In terms of tissue distribution, mammary gland specific. Secreted in milk.

The protein localises to the secreted. Functionally, kappa-casein stabilizes micelle formation, preventing casein precipitation in milk. In Cavia porcellus (Guinea pig), this protein is Kappa-casein (CSN3).